The following is a 62-amino-acid chain: Large ribosomal subunit protein bL33 (62 aa).

The protein belongs to the bacterial ribosomal protein bL33 family.

The protein is Large ribosomal subunit protein bL33 of Bacteroides thetaiotaomicron (strain ATCC 29148 / DSM 2079 / JCM 5827 / CCUG 10774 / NCTC 10582 / VPI-5482 / E50).